The chain runs to 346 residues: DNA ligase (346 aa).

ATP contacts are provided by residues D32 to Y35, R39, R55 to S57, E93, E142, and R149. Residue K34 is the N6-AMP-lysine intermediate of the active site. Position 223 (E223) interacts with a divalent metal cation. Residues K238 and K244 each contribute to the ATP site.

It belongs to the ATP-dependent DNA ligase family. A divalent metal cation is required as a cofactor.

It carries out the reaction ATP + (deoxyribonucleotide)n-3'-hydroxyl + 5'-phospho-(deoxyribonucleotide)m = (deoxyribonucleotide)n+m + AMP + diphosphate.. In terms of biological role, DNA ligase, which is expressed in the early stage of lytic development, has been implicated in T7 DNA synthesis and genetic recombination. It may also play a role in T7 DNA repair. The sequence is that of DNA ligase (1.3) from Enterobacteria phage T3 (Bacteriophage T3).